A 216-amino-acid polypeptide reads, in one-letter code: MAETQTLKAEAREKGSKGAVRSLRRAGRVPAVIYGDKQSPELIAVSYKDVSALYQTGTFMSHVLDVEIGGKTERVIPRDVQFEPVRDFIIHVDFLRLGKNATVTVDVPVHFHNHEASPGIKAGGVLNIVRHEVELVCPADAIPEQLDIDLTGFEMGSSIHISAVKLPAKVSPTITDRDFTIATIAAPAAVVSADNEAKTEEAGEDKSEEKSSGKED.

Disordered stretches follow at residues 1 to 21 (MAET…GAVR) and 192 to 216 (SADN…GKED). Over residues 195 to 216 (NEAKTEEAGEDKSEEKSSGKED) the composition is skewed to basic and acidic residues.

Belongs to the bacterial ribosomal protein bL25 family. CTC subfamily. In terms of assembly, part of the 50S ribosomal subunit; part of the 5S rRNA/L5/L18/L25 subcomplex. Contacts the 5S rRNA. Binds to the 5S rRNA independently of L5 and L18.

This is one of the proteins that binds to the 5S RNA in the ribosome where it forms part of the central protuberance. The chain is Large ribosomal subunit protein bL25 from Parvibaculum lavamentivorans (strain DS-1 / DSM 13023 / NCIMB 13966).